Here is a 243-residue protein sequence, read N- to C-terminus: Max-interacting protein 1 (243 aa).

Residues 76-128 (HYRSTHNELEKNRRAHLRLCLERLKTLIPLGPECSRHTTLGLLNKAKAHIKKL) form the bHLH domain. Residues 164–235 (EAERIRTDSM…TASDEGYSSC (72 aa)) are disordered. The span at 188 to 198 (DQEEMEVDVES) shows a compositional bias: acidic residues. Over residues 222-235 (SLQSTASDEGYSSC) the composition is skewed to polar residues.

As to quaternary structure, efficient DNA binding requires dimerization with another bHLH protein. Binds DNA as a heterodimer with MAX.

The protein localises to the nucleus. In terms of biological role, transcriptional repressor. MXI1 binds with MAX to form a sequence-specific DNA-binding protein complex which recognizes the core sequence 5'-CAC[GA]TG-3'. MXI1 thus antagonizes MYC transcriptional activity by competing for MAX. The protein is Max-interacting protein 1 (mxi1) of Danio rerio (Zebrafish).